We begin with the raw amino-acid sequence, 375 residues long: Tryptophan dimethylallyltransferase (375 aa).

Residues 83 to 84 and Glu92 each bind L-tryptophan; that span reads IL. Substrate-binding residues include Arg103, Lys189, and Tyr191. The L-tryptophan site is built by Tyr193 and Arg246. Residues Arg259, Lys261, Tyr263, Gln345, and Tyr347 each contribute to the substrate site.

It belongs to the tryptophan dimethylallyltransferase family. Homodimer.

It catalyses the reaction L-tryptophan + dimethylallyl diphosphate = 4-(3-methylbut-2-enyl)-L-tryptophan + diphosphate. It participates in alkaloid biosynthesis; ergot alkaloid biosynthesis. Functionally, tryptophan dimethylallyltransferase; part of the gene cluster that mediates the biosynthesis of fungal ergot alkaloid. DmaW catalyzes the first step of ergot alkaloid biosynthesis by condensing dimethylallyl diphosphate (DMAP) and tryptophan to form 4-dimethylallyl-L-tryptophan. The second step is catalyzed by the methyltransferase easF that methylates 4-dimethylallyl-L-tryptophan in the presence of S-adenosyl-L-methionine, resulting in the formation of 4-dimethylallyl-L-abrine. The catalase easC and the FAD-dependent oxidoreductase easE then transform 4-dimethylallyl-L-abrine to chanoclavine-I which is further oxidized by easD in the presence of NAD(+), resulting in the formation of chanoclavine-I aldehyde. Chanoclavine-I aldehyde is the precursor of ergoamides and ergopeptines in Clavicipitaceae, and clavine-type alcaloids such as fumiclavine in Trichocomaceae. However, the metabolites downstream of chanoclavine-I aldehyde in Arthrodermataceae have not been identified yet. This chain is Tryptophan dimethylallyltransferase, found in Trichophyton verrucosum (strain HKI 0517).